We begin with the raw amino-acid sequence, 318 residues long: Protease HtpX homolog (318 aa).

3 consecutive transmembrane segments (helical) span residues 1-21 (MLEAAGAVLLGSAALLMVGRL), 35-55 (ILGLLVGILSLALAALTGSAI), and 56-76 (AGLVVGVITAAMMYLFSSRIV). His-167 lines the Zn(2+) pocket. Glu-168 is a catalytic residue. His-171 contacts Zn(2+). Helical transmembrane passes span 178-198 (LVMTVAAAVSTAIAYAFDPWL) and 209-229 (IAFLVLAGMLASLISTLLVAA). A Zn(2+)-binding site is contributed by Glu-235.

The protein belongs to the peptidase M48B family. Zn(2+) is required as a cofactor.

It localises to the cell membrane. The polypeptide is Protease HtpX homolog (Methanopyrus kandleri (strain AV19 / DSM 6324 / JCM 9639 / NBRC 100938)).